The following is a 635-amino-acid chain: Endo-1,4-beta-xylanase B (635 aa).

A GH10 domain is found at 1–337; sequence MNLKTAYEPY…KEAYYAVLKA (337 aa). Catalysis depends on glutamate 150, which acts as the Proton donor. Glutamate 255 acts as the Nucleophile in catalysis.

This sequence belongs to the glycosyl hydrolase 10 (cellulase F) family.

It catalyses the reaction Endohydrolysis of (1-&gt;4)-beta-D-xylosidic linkages in xylans.. The protein operates within glycan degradation; xylan degradation. In terms of biological role, b.fibrisolvens is located in the rumen of ruminant animals, where it contributes to the animal's digestion of plant material by hydrolyzing hemicellulose with its xylanases. This chain is Endo-1,4-beta-xylanase B (xynB), found in Butyrivibrio fibrisolvens.